Here is an 852-residue protein sequence, read N- to C-terminus: Cell surface glycoprotein (852 aa).

Positions 1 to 34 (MTDTTGKLRAVLLTALMVGSVIGAGVAFTGGAAA) are cleaved as a signal peptide. A glycan (N-linked (GalNAc...) (glycosaminoglycan) asparagine) is linked at asparagine 36. Residues 84 to 131 (KLDNEKEVSPATLSRTGGSDEGVPLQMPIPEDQSTGSYDSNGPDNDEA) form a disordered region. Polar residues predominate over residues 115 to 126 (DQSTGSYDSNGP). 8 N-linked (Glc...) asparagine glycosylation sites follow: asparagine 339, asparagine 398, asparagine 438, asparagine 513, asparagine 643, asparagine 727, asparagine 751, and asparagine 787. The disordered stretch occupies residues 772-828 (ELEEPDQTTVDQPENNQTMTTTMTETTTETTTEMTTTQENTTENGSEGTSDGESGGS). Residues 785 to 823 (ENNQTMTTTMTETTTETTTEMTTTQENTTENGSEGTSDG) are compositionally biased toward low complexity. O-linked (Gal...) threonine glycans are attached at residues threonine 789, threonine 791, threonine 792, threonine 793, threonine 795, threonine 797, threonine 798, threonine 799, threonine 801, threonine 802, threonine 803, threonine 806, threonine 807, and threonine 808. Asparagine 811 is a glycosylation site (N-linked (Glc...) asparagine). O-linked (Gal...) threonine glycans are attached at residues threonine 812 and threonine 813. The N-linked (Glc...) asparagine glycan is linked to asparagine 815. Residues 829–849 (IPGFGVGVALVAVLGAALLAL) traverse the membrane as a helical segment. The PGF sorting signal signature appears at 830 to 832 (PGF).

The protein belongs to the halobacterial S-layer protein family. Post-translationally, N-linked glycan at Asn-36 consists of a glycosaminoglycan chain, constructed by a repeating sulfated pentasaccharide block composed of GlcNAc, GalNAc, Gal, GalA, 3-O-methyl-GalA, and sulfate in the molar ratio of 1:1:1:1:1:2; the other N-linked glycans contain Glc, GlcA and IdoA. O-linked glycans consist of Glc-Gal disaccharides. In terms of processing, the C-terminus (residues 770-778) is lipidated with diphytanylglyceryl phosphate. Post-translationally, cleaved by the archaeosortase ArtA at the C-terminus, with removal of a short hydrophobic segment.

It localises to the secreted. Its subcellular location is the cell wall. It is found in the S-layer. The protein resides in the cell membrane. Functionally, S-layer protein. The S-layer is a paracrystalline mono-layered assembly of proteins which coat the surface of the cell. This chain is Cell surface glycoprotein (csg), found in Halobacterium salinarum (strain ATCC 29341 / DSM 671 / R1).